The following is a 44-amino-acid chain: Photosystem I reaction center subunit IX (44 aa).

Residues 7 to 27 form a helical membrane-spanning segment; that stretch reads YLSVAPVLSTLWFGSLAGLLI.

The protein belongs to the PsaJ family.

It localises to the plastid. The protein resides in the chloroplast thylakoid membrane. Functionally, may help in the organization of the PsaE and PsaF subunits. The protein is Photosystem I reaction center subunit IX of Arabis hirsuta (Hairy rock-cress).